The primary structure comprises 366 residues: Dehydrogenase aclE (366 aa).

An N-terminal signal peptide occupies residues 1–19 (MSKRIRLGIVGLSADPSHC). An N-linked (GlcNAc...) asparagine glycan is attached at N330.

The protein belongs to the Gfo/Idh/MocA family.

It participates in mycotoxin biosynthesis. In terms of biological role, dehydrogenase; part of the gene cluster that mediates the biosynthesis of aspirochlorine (or antibiotic A30641), an unusual halogenated spiro compound with distinctive antifungal properties due to selective inhibition of protein biosynthesis, and which is also active against bacteria, viruses, and murine tumor cells. The non-ribosomal peptide synthetase (NRPS) aclP is responsible the formation of the diketopiperazine (DKP) core from the condensation of 2 phenylalanine residues. One Phe residue is tailored into chlorotyrosine by hydroxylation and chlorination, whereas the second Phe undergoes an unprecedented C-C bond cleavage to be converted into glycine. After formation of the DKP, sulfur is incorporated into the DKP by conjugation with glutathione by aclG, followed by its stepwise degradation to the thiol by aclI, aclJ and aclK, and the dithiol oxidation by aclT. In addition, oxygenases (aclB, aclC, aclL and aclO) and O-methyltransferases (aclM and aclU) act as tailoring enzymes to produce the intermediate dechloroaspirochlorine. Ultimately, chlorination of dechloroaspirochlorine by the halogenase aclH is the last step in the aspirochlorine pathway. This chain is Dehydrogenase aclE, found in Aspergillus oryzae (strain ATCC 42149 / RIB 40) (Yellow koji mold).